Consider the following 449-residue polypeptide: 3-phosphoshikimate 1-carboxyvinyltransferase (449 aa).

The interval 1-26 is disordered; that stretch reads MNHHLPSRPARSRQSQGLKGNLRVPG. Residues lysine 28, serine 29, and arginine 33 each coordinate 3-phosphoshikimate. A phosphoenolpyruvate-binding site is contributed by lysine 28. The phosphoenolpyruvate site is built by glycine 100 and arginine 128. Residues serine 174, glutamine 176, aspartate 327, and lysine 354 each contribute to the 3-phosphoshikimate site. Phosphoenolpyruvate is bound at residue glutamine 176. The active-site Proton acceptor is aspartate 327. The phosphoenolpyruvate site is built by arginine 358 and arginine 403.

The protein belongs to the EPSP synthase family. As to quaternary structure, monomer.

The protein localises to the cytoplasm. It catalyses the reaction 3-phosphoshikimate + phosphoenolpyruvate = 5-O-(1-carboxyvinyl)-3-phosphoshikimate + phosphate. The protein operates within metabolic intermediate biosynthesis; chorismate biosynthesis; chorismate from D-erythrose 4-phosphate and phosphoenolpyruvate: step 6/7. Catalyzes the transfer of the enolpyruvyl moiety of phosphoenolpyruvate (PEP) to the 5-hydroxyl of shikimate-3-phosphate (S3P) to produce enolpyruvyl shikimate-3-phosphate and inorganic phosphate. This is 3-phosphoshikimate 1-carboxyvinyltransferase from Chelativorans sp. (strain BNC1).